The sequence spans 545 residues: Heparanase (545 aa).

Positions 1–37 are cleaved as a signal peptide; sequence MLACRKPGLRPPLLLLLPLLGPLGPCSPGTPAAAAPA. A heparan sulfate group-binding site is contributed by 64–66; sequence DAN. A propeptide spans 112 to 159 (linker peptide); it reads PAFEERSYWLSQSNQDICKSGSIPSDVEEKLRLEWPFQEQVLLREQYQ. Cysteine 129 and cysteine 181 are joined by a disulfide. Residue 160–164 coordinates heparan sulfate group; sequence KKFTN. Asparagine 164 and asparagine 219 each carry an N-linked (GlcNAc...) asparagine glycan. The Proton donor role is filled by glutamate 227. Heparan sulfate group contacts are provided by residues 272–282, histidine 298, and arginine 305; that span reads QPRRNTVKMLK. The required for heterodimerization with the heparanase 8 kDa subunit stretch occupies residues 290–419; the sequence is EVIDSVTWHH…LLFKKLVGNK (130 aa). The active-site Nucleophile is the glutamate 345. Heparan sulfate group is bound by residues 350-352 and 391-393; these read FGG and GNY. Cysteine 439 and cysteine 544 form a disulfide bridge. Asparagine 461 is a glycosylation site (N-linked (GlcNAc...) asparagine). The interval 529–545 is required for transferring proheparanase to the Golgi apparatus, secretion and subsequent enzyme activity and for enhancement of PKB/AKT1 phosphorylation; it reads FSYGFFVIRNAKVAACI.

The protein belongs to the glycosyl hydrolase 79 family. In terms of assembly, heterodimer; heterodimer formation between the 8 kDa and the 50 kDa subunits is required for enzyme activity. Interacts with TF; the interaction, inhibited by heparin, enhances the generation of activated factor X and activates coagulation. Interacts with HRG; the interaction is enhanced at acidic pH, partially inhibits binding of HPSE to cell surface receptors and modulates its enzymatic activity. Interacts with SDC1; the interaction enhances the shedding of SDC1. Interacts with HPSE2. In terms of processing, proteolytically processed. The cleavage of the 65 kDa form leads to the generation of a linker peptide, and the 8 kDa and the 50 kDa products. The active form, the 8/50 kDa heterodimer, is resistant to degradation. Complete removal of the linker peptide appears to be a prerequisite to the complete activation of the enzyme. N-glycosylated. Glycosylation of the 50 kDa subunit appears to be essential for its solubility. Highly expressed in placenta and weakly in the kidney, lung, spleen and uterus.

It is found in the lysosome membrane. The protein localises to the secreted. Its subcellular location is the nucleus. It catalyses the reaction endohydrolysis of (1-&gt;4)-beta-D-glycosidic bonds of heparan sulfate chains in heparan sulfate proteoglycan.. Inhibited by laminarin sulfate and, to a lower extent, by heparin, sulfamin and EDTA. Activated by calcium and magnesium. Its function is as follows. Endoglycosidase that cleaves heparan sulfate proteoglycans (HSPGs) into heparan sulfate side chains and core proteoglycans. Participates in extracellular matrix (ECM) degradation and remodeling. Selectively cleaves the linkage between a glucuronic acid unit and an N-sulfo glucosamine unit carrying either a 3-O-sulfo or a 6-O-sulfo group. Can also cleave the linkage between a glucuronic acid unit and an N-sulfo glucosamine unit carrying a 2-O-sulfo group, but not linkages between a glucuronic acid unit and a 2-O-sulfated iduronic acid moiety. Essentially inactive at neutral pH but becomes active under acidic conditions such as during tumor invasion and in inflammatory processes. Facilitates cell migration associated with metastasis, wound healing and inflammation. Enhances shedding of syndecans. Acts as a procoagulant by enhancing the generation of activated factor X/F10 in the presence of tissue factor/TF and activated factor VII/F7. Independent of its enzymatic activity, increases cell adhesion to the extracellular matrix (ECM). Enhances AKT1/PKB phosphorylation, possibly via interaction with a lipid raft-resident receptor. Plays a role in the regulation of osteogenesis. Enhances angiogenesis through up-regulation of SRC-mediated activation of VEGF. Implicated in hair follicle inner root sheath differentiation and hair homeostasis. This Bos taurus (Bovine) protein is Heparanase (HPSE).